A 162-amino-acid polypeptide reads, in one-letter code: Phenazine biosynthesis protein PhzA1 (162 aa).

This sequence belongs to the PhzA/PhzB family.

Its pathway is antibiotic biosynthesis; phenazine biosynthesis. Its function is as follows. Involved in the biosynthesis of the antibiotic phenazine, a nitrogen-containing heterocyclic molecule. PhzA1 (operon phzA1B1C1E1F1G1) has a role in the biosynthesis of the phenazine during planktonic growth. The sequence is that of Phenazine biosynthesis protein PhzA1 from Pseudomonas aeruginosa (strain ATCC 15692 / DSM 22644 / CIP 104116 / JCM 14847 / LMG 12228 / 1C / PRS 101 / PAO1).